Reading from the N-terminus, the 198-residue chain is Ribonuclease HII (198 aa).

The RNase H type-2 domain maps to 3–198 (FLEGGVDEAG…SWRTLRGESP (196 aa)). D9, E10, and D104 together coordinate a divalent metal cation.

It belongs to the RNase HII family. Mn(2+) serves as cofactor. The cofactor is Mg(2+).

It localises to the cytoplasm. It carries out the reaction Endonucleolytic cleavage to 5'-phosphomonoester.. Its function is as follows. Endonuclease that specifically degrades the RNA of RNA-DNA hybrids. This chain is Ribonuclease HII, found in Pyrobaculum neutrophilum (strain DSM 2338 / JCM 9278 / NBRC 100436 / V24Sta) (Thermoproteus neutrophilus).